Consider the following 497-residue polypeptide: NADH-quinone oxidoreductase subunit N (497 aa).

A run of 14 helical transmembrane segments spans residues 14–34 (LMAM…MLSI), 45–65 (SLTV…WGLF), 86–106 (IFYS…AYPW), 116–136 (EFYL…SAQH), 137–157 (LAAV…LLGY), 171–191 (YFVL…MLYA), 215–235 (ILAG…LVPF), 253–273 (FLGT…FLYV), 281–301 (LNTA…LMAL), 309–329 (LLGY…IALH), 338–358 (VAVY…VVSL), 385–405 (AAVM…LGFI), 420–439 (WVLT…YYLR), and 461–481 (AFTA…VFGI).

It belongs to the complex I subunit 2 family. In terms of assembly, NDH-1 is composed of 13 different subunits. Subunits NuoA, H, J, K, L, M, N constitute the membrane sector of the complex.

It localises to the cell membrane. The catalysed reaction is a quinone + NADH + 5 H(+)(in) = a quinol + NAD(+) + 4 H(+)(out). In terms of biological role, NDH-1 shuttles electrons from NADH, via FMN and iron-sulfur (Fe-S) centers, to quinones in the respiratory chain. The immediate electron acceptor for the enzyme in this species is believed to be ubiquinone. Couples the redox reaction to proton translocation (for every two electrons transferred, four hydrogen ions are translocated across the cytoplasmic membrane), and thus conserves the redox energy in a proton gradient. The protein is NADH-quinone oxidoreductase subunit N of Hamiltonella defensa subsp. Acyrthosiphon pisum (strain 5AT).